Consider the following 156-residue polypeptide: MDKKVTEIVEAFAQPIVEELNLELVDVEYVQEGQDWFLRVFIDSEKGVEIEECGAVSERLSEALDKEDPIPHLYFLDVSSPGAERPLKKEKDFQQAVGKQVAIKTYKPIDGEKMFEGKLLSYDGNTITLLLTIKTRKKEIQIPMDKVANARLAVTF.

Belongs to the RimP family.

It is found in the cytoplasm. Functionally, required for maturation of 30S ribosomal subunits. The polypeptide is Ribosome maturation factor RimP (Bacillus mycoides (strain KBAB4) (Bacillus weihenstephanensis)).